The following is a 177-amino-acid chain: Large ribosomal subunit protein uL10 (177 aa).

This sequence belongs to the universal ribosomal protein uL10 family. In terms of assembly, part of the ribosomal stalk of the 50S ribosomal subunit. The N-terminus interacts with L11 and the large rRNA to form the base of the stalk. The C-terminus forms an elongated spine to which L12 dimers bind in a sequential fashion forming a multimeric L10(L12)X complex.

In terms of biological role, forms part of the ribosomal stalk, playing a central role in the interaction of the ribosome with GTP-bound translation factors. This is Large ribosomal subunit protein uL10 from Legionella pneumophila (strain Paris).